The primary structure comprises 597 residues: Phosphomethylpyrimidine synthase (597 aa).

Residues Asn-207, Met-236, Tyr-265, His-301, 321 to 323 (SRG), 362 to 365 (DGLR), and Glu-401 each bind substrate. Position 405 (His-405) interacts with Zn(2+). Position 428 (Tyr-428) interacts with substrate. His-469 is a Zn(2+) binding site. 3 residues coordinate [4Fe-4S] cluster: Cys-549, Cys-552, and Cys-557.

The protein belongs to the ThiC family. In terms of assembly, homodimer. [4Fe-4S] cluster is required as a cofactor.

The catalysed reaction is 5-amino-1-(5-phospho-beta-D-ribosyl)imidazole + S-adenosyl-L-methionine = 4-amino-2-methyl-5-(phosphooxymethyl)pyrimidine + CO + 5'-deoxyadenosine + formate + L-methionine + 3 H(+). It functions in the pathway cofactor biosynthesis; thiamine diphosphate biosynthesis. Its function is as follows. Catalyzes the synthesis of the hydroxymethylpyrimidine phosphate (HMP-P) moiety of thiamine from aminoimidazole ribotide (AIR) in a radical S-adenosyl-L-methionine (SAM)-dependent reaction. The polypeptide is Phosphomethylpyrimidine synthase (Gluconobacter oxydans (strain 621H) (Gluconobacter suboxydans)).